The primary structure comprises 336 residues: Serpentine receptor class alpha-10 (336 aa).

At 1–28 (MGPITANSSKCATEDQMILQTSLLLRIN) the chain is on the extracellular side. The helical transmembrane segment at 29–49 (VIIMTIVAIITFILTYKALFI) threads the bilayer. Residues 50 to 61 (LKIRPIFHSSTK) are Cytoplasmic-facing. A helical membrane pass occupies residues 62 to 82 (ILLYTSLLFVNVHAVIFMVIQ). At 83 to 107 (NTALIRSFTLSDKPCEIMRTTLECR) the chain is on the extracellular side. Residues 108–128 (FQNHVLIFGIAGVNFNQFGLT) form a helical membrane-spanning segment. Topologically, residues 129 to 148 (VDRLLATIIPQSYSHMGALP) are cytoplasmic. Residues 149–169 (GVILSVLVVACSIAAPLIIAI) traverse the membrane as a helical segment. The Extracellular portion of the chain corresponds to 170 to 192 (GDPYDDIVPNCFFFPEHSAPRAN). A helical transmembrane segment spans residues 193-213 (IFLVTLSTLVITSIFLNFIII). Topologically, residues 214–243 (YANKKLEKGCRTRFYVTQRYQKREALISTR) are cytoplasmic. The chain crosses the membrane as a helical span at residues 244–264 (IISYIAASQFLGLTLYSTMVL). Residues 265 to 280 (TLRLHKSMIPISIYHN) are Extracellular-facing. A helical membrane pass occupies residues 281–301 (MVWWAYTVPFAAVSLPALLIY). Over 302 to 336 (RINQVGSNRKRVINRITAKVETQEEHMKSLKELWA) the chain is Cytoplasmic.

This sequence belongs to the nematode receptor-like protein sra family. Expressed in the URX sensory neuron, the ALA interneuron and in additional interneurons, pharyngeal neurons and muscle.

It localises to the membrane. This is Serpentine receptor class alpha-10 (sra-10) from Caenorhabditis elegans.